We begin with the raw amino-acid sequence, 190 residues long: Selenoprotein S (190 aa).

A compositionally biased stretch (basic and acidic residues) spans 1–13 (MEAEDGARVRNED). Residues 1–20 (MEAEDGARVRNEDVPPQNQD) form a disordered region. The helical transmembrane segment at 30–50 (AFMSEYGWYLLFGCVGVYLLI) threads the bilayer. The segment covering 58-68 (SSTQTRSSSGS) has biased composition (low complexity). The interval 58–190 (SSTQTRSSSG…RRGPSAGGUG (133 aa)) is disordered. Residues 79–120 (RRQEALEASRRRMQEEQDARAAEFREKQRMLEEEKRRQKIEM) show a composition bias toward basic and acidic residues. Over residues 136-151 (VAQQNTEEAASSSSLR) the composition is skewed to polar residues. Residue selenocysteine 189 is a non-standard amino acid, selenocysteine.

It belongs to the selenoprotein S family.

The protein resides in the endoplasmic reticulum membrane. The protein localises to the cytoplasm. Involved in the degradation process of misfolded endoplasmic reticulum (ER) luminal proteins. Participates in the transfer of misfolded proteins from the ER to the cytosol, where they are destroyed by the proteasome in a ubiquitin-dependent manner. The sequence is that of Selenoprotein S (vimp) from Danio rerio (Zebrafish).